A 323-amino-acid polypeptide reads, in one-letter code: Putative HTH-type transcriptional regulatory protein Hlac_0273 (323 aa).

The HTH cro/C1-type domain maps to 132 to 189 (LADEREERGWSLGRLATELGVSRRTVSKYEDGMNASIEVAIQLEDLFNEPFSSPVDVL). A DNA-binding region (H-T-H motif) is located at residues 143 to 162 (LGRLATELGVSRRTVSKYED). The segment at 188–211 (VLDGAGEVRDADPTPSAPETDPDD) is disordered.

This Halorubrum lacusprofundi (strain ATCC 49239 / DSM 5036 / JCM 8891 / ACAM 34) protein is Putative HTH-type transcriptional regulatory protein Hlac_0273.